Here is a 507-residue protein sequence, read N- to C-terminus: Histidine ammonia-lyase (507 aa).

Positions 141–143 (ASG) form a cross-link, 5-imidazolinone (Ala-Gly). Position 142 is a 2,3-didehydroalanine (Ser) (Ser142).

The protein belongs to the PAL/histidase family. Post-translationally, contains an active site 4-methylidene-imidazol-5-one (MIO), which is formed autocatalytically by cyclization and dehydration of residues Ala-Ser-Gly.

The protein localises to the cytoplasm. It carries out the reaction L-histidine = trans-urocanate + NH4(+). It functions in the pathway amino-acid degradation; L-histidine degradation into L-glutamate; N-formimidoyl-L-glutamate from L-histidine: step 1/3. The sequence is that of Histidine ammonia-lyase from Burkholderia orbicola (strain MC0-3).